Reading from the N-terminus, the 823-residue chain is Protein Jade-3 (823 aa).

The interval 1–40 (MKRHRPVSSSESSDECPSTSFTSSSMYRKKSKNPKEQKKS) is disordered. A compositionally biased stretch (low complexity) spans 8 to 20 (SSSESSDECPSTS). N6-acetyllysine occurs at positions 30, 32, and 35. A PHD-type 1 zinc finger spans residues 200–250 (DVICDVCRSPDSEEGNDMVFCDKCNVCVHQACYGILKIPEGSWLCRSCVLG). The C2HC pre-PHD-type zinc finger occupies 252–286 (YPQCVLCPKKGGAMKTTRTGTKWAHVSCALWIPEV). The segment at 310 to 366 (LVCNLCKLKTGACIQCSVKSCITAFHVTCAFEHGLEMKTILDEGDEVKFKSFCLKHS) adopts a PHD-type 2 zinc-finger fold. Disordered stretches follow at residues 543 to 585 (LKMP…PEEP) and 601 to 631 (KSNC…AEFY). Positions 549–562 (TSEDCKDSSTETEH) are enriched in basic and acidic residues. Serine 566 and serine 578 each carry phosphoserine. Position 601 is an N6-acetyllysine (lysine 601). Position 608 is a phosphoserine (serine 608). An N6-acetyllysine modification is found at lysine 638. A disordered region spans residues 651 to 676 (SIGNGKNQPNSRVSSSNGLEGNWSGN). Lysine 735 is modified (N6-acetyllysine). Residues 756–823 (TGRASYQETD…HPHSHSSMQR (68 aa)) are disordered. Phosphoserine occurs at positions 774 and 776. A compositionally biased stretch (basic and acidic residues) spans 781-809 (EGSKETPRVKRESSDRENPSHDSARECHG).

The protein belongs to the JADE family. Component of the HBO1 complex composed at least of ING4 or ING5, MYST2/HBO1, MEAF6, and one of JADE1, JADE2 and JADE3.

Functionally, scaffold subunit of some HBO1 complexes, which have a histone H4 acetyltransferase activity. The polypeptide is Protein Jade-3 (Jade3) (Mus musculus (Mouse)).